Reading from the N-terminus, the 95-residue chain is Large ribosomal subunit protein bL28 (95 aa).

The protein belongs to the bacterial ribosomal protein bL28 family.

In Orientia tsutsugamushi (strain Ikeda) (Rickettsia tsutsugamushi), this protein is Large ribosomal subunit protein bL28.